The chain runs to 159 residues: Outer envelope pore protein 16-3, chloroplastic/mitochondrial (159 aa).

Residue Met1 is modified to N-acetylmethionine. A contains beta strands region spans residues 1 to 65 (MDPAEMRYLE…IRTLKMMGTH (65 aa)). The next 3 helical transmembrane spans lie at 24-40 (ITGF…LATW), 62-79 (MGTH…YIGV), and 92-109 (FYNG…VLGY).

Belongs to the Tim17/Tim22/Tim23 family. Plastid outer envelope porin OEP16 (TC 1.B.30) subfamily. Homodimer and oligomers in membrane. Part of both the NADH-ubiquinone oxidoreductase complex I and of the TIM17:23 complex. Interacts with TIM23-2.

Its subcellular location is the plastid. It localises to the chloroplast outer membrane. The protein localises to the mitochondrion outer membrane. It is found in the mitochondrion inner membrane. Functionally, voltage-dependent high-conductance channel with a slight cation-selectivity; selective for amino acids but excludes triosephosphates or uncharged sugars. Non-essential amino acid-selective channel protein and translocation pore for NADPH:protochlorophyllide oxidoreductase A (PORA) and possibly PORB. This is Outer envelope pore protein 16-3, chloroplastic/mitochondrial (OEP163) from Arabidopsis thaliana (Mouse-ear cress).